Here is a 689-residue protein sequence, read N- to C-terminus: DNA topoisomerase 1 (689 aa).

Residues 3–113 (DNLVIVESPA…KENRVVFNEI (111 aa)) enclose the Toprim domain. 2 residues coordinate Mg(2+): Glu-9 and Asp-82. The 429-residue stretch at 129-557 (EMNLVDAQQA…FFSSFKQDVE (429 aa)) folds into the Topo IA-type catalytic domain. The segment at 163–168 (SAGRVQ) is interaction with DNA. Residue Tyr-298 is the O-(5'-phospho-DNA)-tyrosine intermediate of the active site. Residues 328–357 (SKRKASGKQGDQDAHEAIRPSSTMRTPDDM) are disordered. C4-type zinc fingers lie at residues 577–603 (CEVCGSPMVIKMGRYGKFMACSNFPDC), 617–645 (CPKCNDGDVVERKSKKNRVFYGCSKYPEC), and 658–681 (CPKCNQYLVENKKGKTTQVICSNC).

It belongs to the type IA topoisomerase family. In terms of assembly, monomer. Requires Mg(2+) as cofactor.

It catalyses the reaction ATP-independent breakage of single-stranded DNA, followed by passage and rejoining.. Functionally, releases the supercoiling and torsional tension of DNA, which is introduced during the DNA replication and transcription, by transiently cleaving and rejoining one strand of the DNA duplex. Introduces a single-strand break via transesterification at a target site in duplex DNA. The scissile phosphodiester is attacked by the catalytic tyrosine of the enzyme, resulting in the formation of a DNA-(5'-phosphotyrosyl)-enzyme intermediate and the expulsion of a 3'-OH DNA strand. The free DNA strand then undergoes passage around the unbroken strand, thus removing DNA supercoils. Finally, in the religation step, the DNA 3'-OH attacks the covalent intermediate to expel the active-site tyrosine and restore the DNA phosphodiester backbone. This is DNA topoisomerase 1 from Staphylococcus aureus (strain bovine RF122 / ET3-1).